A 101-amino-acid polypeptide reads, in one-letter code: Cilia- and flagella-associated protein 141 (101 aa).

In terms of assembly, microtubule inner protein component of sperm flagellar doublet microtubules. In terms of tissue distribution, expressed in airway epithelial cells.

It localises to the cytoplasm. The protein resides in the cytoskeleton. The protein localises to the cilium axoneme. It is found in the flagellum axoneme. Its function is as follows. Microtubule inner protein (MIP) part of the dynein-decorated doublet microtubules (DMTs) in cilia axoneme, which is required for motile cilia beating. This Homo sapiens (Human) protein is Cilia- and flagella-associated protein 141.